A 609-amino-acid polypeptide reads, in one-letter code: 2',5'-phosphodiesterase 12 (609 aa).

A mitochondrion-targeting transit peptide spans 1–16 (MWRLPGVRAALRGVRT). The segment at 203 to 231 (PRAAEPEGGGPSSSSPSSPSPGWTETGVD) is disordered. Residues 214 to 224 (SSSSPSSPSPG) show a composition bias toward low complexity. Ser-217 carries the phosphoserine modification. Residues Glu-351, Asp-496, and Asn-498 each contribute to the Mg(2+) site. Asp-496 functions as the Proton donor/acceptor in the catalytic mechanism.

Belongs to the CCR4/nocturin family. Mg(2+) serves as cofactor. Liver.

The protein localises to the mitochondrion matrix. The catalysed reaction is Exonucleolytic cleavage of poly(A) to 5'-AMP.. Functionally, enzyme that cleaves 2',5'-phosphodiester bond linking adenosines of the 5'-triphosphorylated oligoadenylates, triphosphorylated oligoadenylates referred as 2-5A modulates the 2-5A system. Degrades triphosphorylated 2-5A to produce AMP and ATP. Also cleaves 3',5'-phosphodiester bond of oligoadenylates. Plays a role as a negative regulator of the 2-5A system that is one of the major pathways for antiviral and antitumor functions induced by interferons (IFNs). Suppression of this enzyme increases cellular 2-5A levels and decreases viral replication in cultured small-airway epithelial cells. This Bos taurus (Bovine) protein is 2',5'-phosphodiesterase 12 (PDE12).